Here is a 333-residue protein sequence, read N- to C-terminus: Ketol-acid reductoisomerase (NADP(+)) (333 aa).

A KARI N-terminal Rossmann domain is found at 2–182 (AKMYYDSDAS…GCTRAGVLET (181 aa)). Residues 25-28 (YGSQ), Arg48, Ser51, and 83-86 (DERQ) contribute to the NADP(+) site. His108 is a catalytic residue. Gly134 lines the NADP(+) pocket. Residues 183-328 (TFKEETETDL…AELRAMMPFI (146 aa)) form the KARI C-terminal knotted domain. 4 residues coordinate Mg(2+): Asp191, Glu195, Glu227, and Glu231. Ser252 is a substrate binding site.

It belongs to the ketol-acid reductoisomerase family. It depends on Mg(2+) as a cofactor.

It carries out the reaction (2R)-2,3-dihydroxy-3-methylbutanoate + NADP(+) = (2S)-2-acetolactate + NADPH + H(+). It catalyses the reaction (2R,3R)-2,3-dihydroxy-3-methylpentanoate + NADP(+) = (S)-2-ethyl-2-hydroxy-3-oxobutanoate + NADPH + H(+). It functions in the pathway amino-acid biosynthesis; L-isoleucine biosynthesis; L-isoleucine from 2-oxobutanoate: step 2/4. Its pathway is amino-acid biosynthesis; L-valine biosynthesis; L-valine from pyruvate: step 2/4. In terms of biological role, involved in the biosynthesis of branched-chain amino acids (BCAA). Catalyzes an alkyl-migration followed by a ketol-acid reduction of (S)-2-acetolactate (S2AL) to yield (R)-2,3-dihydroxy-isovalerate. In the isomerase reaction, S2AL is rearranged via a Mg-dependent methyl migration to produce 3-hydroxy-3-methyl-2-ketobutyrate (HMKB). In the reductase reaction, this 2-ketoacid undergoes a metal-dependent reduction by NADPH to yield (R)-2,3-dihydroxy-isovalerate. The polypeptide is Ketol-acid reductoisomerase (NADP(+)) (Desulfitobacterium hafniense (strain DSM 10664 / DCB-2)).